Consider the following 424-residue polypeptide: Dehydrogenase FUM7 (424 aa).

Belongs to the iron-containing alcohol dehydrogenase family. It depends on Fe cation as a cofactor.

The protein operates within mycotoxin biosynthesis. Its function is as follows. Dehydrogenase; part of the gene cluster that mediates the biosynthesis of fumonisins B1 (FB1), B2 (FB2), B3 (FB3), and B4 (FB4), which are carcinogenic mycotoxins. Within the pathway, FUM7 is involved the addition of the tricarballylic moieties to the carbon backbone. FUM7 dehydrogenase removes the C-3 hydroxyl of citrate to form tricarballylic acid either before or after the CoA activation by the FUM10 acyl-CoA synthetase and FUM14 catalyzed esterification of CoA-activated tricarballylic acid to the C-14 and C-15 hydroxyls of the fumonisin backbone. The biosynthesis starts with the FUM1-catalyzed carbon chain assembly from one molecule of acetyl-CoA, eight molecules of malonyl-CoA, and two molecules of methionine (in S-adenosyl form). The C18 polyketide chain is released from the enzyme by a nucleophilic attack of a carbanion, which is derived from R-carbon of alanine by decarboxylation, on the carbonyl carbon of polyketide acyl chain. This step is catalyzed by the pyridoxal 5'-phosphate-dependent aminoacyl transferase FUM8. The resultant 3-keto intermediate is then stereospecifically reduced to a 3-hydroxyl product by reductase FUM13. Subsequent oxidations at C-10 by the cytochrome P450 monooxygenase FUM2, C-14 and C-15 by FUM6, FUM12 or FUM15, tricarballylic esterification of the hydroxyl groups on C-14 and C-15 by acyltransferase FUM14, and C-5 hydroxylation by 2-keto-glutarate-dependent dioxygenase FUM3 furnish the biosynthesis of fumonisins. The tricarballylic moieties are most likely derived from the citric acid cycle, and their addition to the carbon backbone may involve FUM7, FUM10, FUM11 and FUM14. The chain is Dehydrogenase FUM7 from Gibberella moniliformis (strain M3125 / FGSC 7600) (Maize ear and stalk rot fungus).